Reading from the N-terminus, the 274-residue chain is Lipid phosphate phosphatase 1 (274 aa).

The Lumenal segment spans residues 1 to 15 (MISVMADEKHKEYFK). A helical membrane pass occupies residues 16–33 (LYYFQYMIIGLCTILFLY). The Cytoplasmic portion of the chain corresponds to 34–69 (SEISLVPRGQNIEFSLDDPSISKRYVPNELVGPLEC). The chain crosses the membrane as a helical span at residues 70 to 87 (LILSVGLSNMVVFWTCMF). The Lumenal segment spans residues 88 to 117 (DKDLLKKNRVKRLRERPDGISNDFHFMHTS). Residues 118–139 (ILCLMLIISINAALTGALKLII) form a helical membrane-spanning segment. Residues 136 to 144 (KLIIGNLRP) are phosphatase sequence motif I. The Cytoplasmic segment spans residues 140-189 (GNLRPDFVDRCIPDLQKMSDSDSLVFGLDICKQTNKWILYEGLKSTPSGH). A phosphatase sequence motif II region spans residues 186–189 (PSGH). A helical transmembrane segment spans residues 190–203 (SSFIVSTMGFTYLW). At 204–214 (QRVFTTRNTRS) the chain is on the lumenal side. A helical transmembrane segment spans residues 215–231 (CIWCPLLALVVMVSRVI). A phosphatase sequence motif III region spans residues 228–239 (SRVIDHRHHWYD). Topologically, residues 232-237 (DHRHHW) are cytoplasmic. Residues 238–255 (YDVVSGAVLAFLVIYCCW) form a helical membrane-spanning segment. The Lumenal portion of the chain corresponds to 256–274 (KWTFTNLAKRDILPSPVSV).

This sequence belongs to the PA-phosphatase related phosphoesterase family.

Its subcellular location is the golgi apparatus membrane. The enzyme catalyses a 1,2-diacyl-sn-glycerol 3-diphosphate + H2O = a 1,2-diacyl-sn-glycero-3-phosphate + phosphate + H(+). The catalysed reaction is a 1,2-diacyl-sn-glycero-3-phosphate + H2O = a 1,2-diacyl-sn-glycerol + phosphate. It catalyses the reaction a 1-acyl-sn-glycero-3-phosphate + H2O = a 1-acyl-sn-glycerol + phosphate. With respect to regulation, PA phosphatase activity is magnesium ion-independent and potently inhibited by N-ethylmaleimide. Also inhibited by phenylglyoxal and propranolol. Catalyzes the dephosphorylation of diacylglycerol diphosphate (DGPP) to phosphatidate (PA) and the subsequent dephosphorylation of PA to diacylglycerol (DAG). Together with DPP1, regulates intracellular DGPP and PA levels which are phospholipid molecules believed to play a signaling role in stress response. Can also use lysophosphatidic acid (LPA) as a substrate. Substrate preference is PA &gt; DGPP &gt; LPA. This chain is Lipid phosphate phosphatase 1 (LPP1), found in Saccharomyces cerevisiae (strain ATCC 204508 / S288c) (Baker's yeast).